Reading from the N-terminus, the 132-residue chain is MIIGIGSDLCDIRRITRSLERFGDRFTHRVFTEGERARSDRRAARAPSYARRFAAKEACAKALGTGMAQGVFWRDMEVVNLPSGRPTLRLTGGAAAQLAAITPAGHRALVHVTLTDDPPLAQAFVVIEALPE.

Residues Asp-8 and Glu-57 each coordinate Mg(2+).

The protein belongs to the P-Pant transferase superfamily. AcpS family. Mg(2+) serves as cofactor.

It localises to the cytoplasm. It carries out the reaction apo-[ACP] + CoA = holo-[ACP] + adenosine 3',5'-bisphosphate + H(+). Its function is as follows. Transfers the 4'-phosphopantetheine moiety from coenzyme A to a Ser of acyl-carrier-protein. This chain is Holo-[acyl-carrier-protein] synthase, found in Methylobacterium nodulans (strain LMG 21967 / CNCM I-2342 / ORS 2060).